The following is a 503-amino-acid chain: Cobyric acid synthase (503 aa).

A GATase cobBQ-type domain is found at 260-453 (KIGVAAIYFP…FHALFDESSV (194 aa)). Catalysis depends on Cys-341, which acts as the Nucleophile. His-445 is an active-site residue.

Belongs to the CobB/CobQ family. CobQ subfamily.

It participates in cofactor biosynthesis; adenosylcobalamin biosynthesis. In terms of biological role, catalyzes amidations at positions B, D, E, and G on adenosylcobyrinic A,C-diamide. NH(2) groups are provided by glutamine, and one molecule of ATP is hydrogenolyzed for each amidation. The polypeptide is Cobyric acid synthase (Pelodictyon phaeoclathratiforme (strain DSM 5477 / BU-1)).